The following is an 89-amino-acid chain: MSLSVEAKAKIVADFGRGTNDTGSSEVQVALLTAQINHLQGHFSEHKKDHHSRRGLLRMVSTRRKLLDYLKRQDVARYASLIERLGLRR.

It belongs to the universal ribosomal protein uS15 family. In terms of assembly, part of the 30S ribosomal subunit. Forms a bridge to the 50S subunit in the 70S ribosome, contacting the 23S rRNA.

Functionally, one of the primary rRNA binding proteins, it binds directly to 16S rRNA where it helps nucleate assembly of the platform of the 30S subunit by binding and bridging several RNA helices of the 16S rRNA. Forms an intersubunit bridge (bridge B4) with the 23S rRNA of the 50S subunit in the ribosome. The sequence is that of Small ribosomal subunit protein uS15 from Yersinia pseudotuberculosis serotype O:1b (strain IP 31758).